The sequence spans 568 residues: Proline--tRNA ligase (568 aa).

Belongs to the class-II aminoacyl-tRNA synthetase family. ProS type 1 subfamily. As to quaternary structure, homodimer.

The protein resides in the cytoplasm. The enzyme catalyses tRNA(Pro) + L-proline + ATP = L-prolyl-tRNA(Pro) + AMP + diphosphate. Its function is as follows. Catalyzes the attachment of proline to tRNA(Pro) in a two-step reaction: proline is first activated by ATP to form Pro-AMP and then transferred to the acceptor end of tRNA(Pro). As ProRS can inadvertently accommodate and process non-cognate amino acids such as alanine and cysteine, to avoid such errors it has two additional distinct editing activities against alanine. One activity is designated as 'pretransfer' editing and involves the tRNA(Pro)-independent hydrolysis of activated Ala-AMP. The other activity is designated 'posttransfer' editing and involves deacylation of mischarged Ala-tRNA(Pro). The misacylated Cys-tRNA(Pro) is not edited by ProRS. This chain is Proline--tRNA ligase, found in Halorhodospira halophila (strain DSM 244 / SL1) (Ectothiorhodospira halophila (strain DSM 244 / SL1)).